The sequence spans 715 residues: Gelsolin, cytoplasmic (715 aa).

The actin-severing stretch occupies residues 1–124; that stretch reads MTTELEIQKA…YLIGGVASGF (124 aa). One copy of the Gelsolin-like 1 repeat lies at 24–75; sequence FELVPVPKTNHGKFYTGDSYIILKTTALESGRGFEWNLHYWQGKESSQDERG. The tract at residues 72–75 is actin-actin interfilament contact point; it reads DERG. Residue 136–145 coordinates a 1,2-diacyl-sn-glycero-3-phospho-(1D-myo-inositol-4,5-bisphosphate); that stretch reads KVLTRVKGKR. 3 Gelsolin-like repeats span residues 147–187, 260–306, and 405–451; these read VRAT…FEKN, LKIT…TERA, and LRKE…NERT. Residues 384 to 715 form an actin-binding, Ca-sensitive region; the sequence is AAESKMIDDG…FLGWDKTLWD (332 aa). Gly-421, Asp-422, Glu-449, Thr-499, Asn-539, Asp-540, Glu-562, Asp-642, and Glu-665 together coordinate Ca(2+). Gelsolin-like repeat units lie at residues 524–564 and 625–667; these read CRAV…SEIQ and FIAE…EEKM.

Belongs to the villin/gelsolin family. Predominantly in the body wall muscle, but expression is not restricted to muscle cells.

The protein localises to the cytoplasm. The protein resides in the cytoskeleton. Calcium-regulated, actin-modulating protein that binds to the plus (or barbed) ends of actin monomers or filaments, preventing monomer exchange (end-blocking or capping). It can promote the assembly of monomers into filaments (nucleation) as well as sever filaments already formed. This is Gelsolin, cytoplasmic from Halocynthia roretzi (Sea squirt).